Reading from the N-terminus, the 511-residue chain is Glucans biosynthesis protein G (511 aa).

An N-terminal signal peptide occupies residues 1–22 (MMKMRWLGAAIMLTLYASSSWA).

Belongs to the OpgD/OpgG family.

The protein resides in the periplasm. The protein operates within glycan metabolism; osmoregulated periplasmic glucan (OPG) biosynthesis. Involved in the biosynthesis of osmoregulated periplasmic glucans (OPGs). This Salmonella paratyphi A (strain ATCC 9150 / SARB42) protein is Glucans biosynthesis protein G.